The chain runs to 364 residues: UDP-N-acetylenolpyruvoylglucosamine reductase (364 aa).

The 167-residue stretch at 30–196 folds into the FAD-binding PCMH-type domain; that stretch reads LGGPATRLIT…LRVRFELEDA (167 aa). Residue Arg-173 is part of the active site. The Proton donor role is filled by Ser-252. Residue Glu-356 is part of the active site.

This sequence belongs to the MurB family. FAD is required as a cofactor.

The protein localises to the cytoplasm. It carries out the reaction UDP-N-acetyl-alpha-D-muramate + NADP(+) = UDP-N-acetyl-3-O-(1-carboxyvinyl)-alpha-D-glucosamine + NADPH + H(+). It participates in cell wall biogenesis; peptidoglycan biosynthesis. In terms of biological role, cell wall formation. This chain is UDP-N-acetylenolpyruvoylglucosamine reductase, found in Streptomyces avermitilis (strain ATCC 31267 / DSM 46492 / JCM 5070 / NBRC 14893 / NCIMB 12804 / NRRL 8165 / MA-4680).